The chain runs to 176 residues: Adenine phosphoribosyltransferase (176 aa).

Belongs to the purine/pyrimidine phosphoribosyltransferase family. As to quaternary structure, homodimer.

The protein resides in the cytoplasm. It catalyses the reaction AMP + diphosphate = 5-phospho-alpha-D-ribose 1-diphosphate + adenine. It functions in the pathway purine metabolism; AMP biosynthesis via salvage pathway; AMP from adenine: step 1/1. In terms of biological role, catalyzes a salvage reaction resulting in the formation of AMP, that is energically less costly than de novo synthesis. The polypeptide is Adenine phosphoribosyltransferase (Borreliella burgdorferi (strain ZS7) (Borrelia burgdorferi)).